We begin with the raw amino-acid sequence, 478 residues long: Sulfate adenylyltransferase subunit 1 (478 aa).

Positions 24–240 (KSMLRFLTCG…VLEDIDIDAD (217 aa)) constitute a tr-type G domain. The tract at residues 33 to 40 (GSVDDGKS) is G1. 33 to 40 (GSVDDGKS) lines the GTP pocket. Positions 91–95 (GITID) are G2. A G3 region spans residues 112–115 (DTPG). Residues 112–116 (DTPGH) and 167–170 (NKMD) each bind GTP. A G4 region spans residues 167-170 (NKMD). Residues 206–208 (SAL) form a G5 region.

Belongs to the TRAFAC class translation factor GTPase superfamily. Classic translation factor GTPase family. CysN/NodQ subfamily. In terms of assembly, heterodimer composed of CysD, the smaller subunit, and CysN.

The enzyme catalyses sulfate + ATP + H(+) = adenosine 5'-phosphosulfate + diphosphate. Its pathway is sulfur metabolism; hydrogen sulfide biosynthesis; sulfite from sulfate: step 1/3. With CysD forms the ATP sulfurylase (ATPS) that catalyzes the adenylation of sulfate producing adenosine 5'-phosphosulfate (APS) and diphosphate, the first enzymatic step in sulfur assimilation pathway. APS synthesis involves the formation of a high-energy phosphoric-sulfuric acid anhydride bond driven by GTP hydrolysis by CysN coupled to ATP hydrolysis by CysD. The chain is Sulfate adenylyltransferase subunit 1 from Aliivibrio salmonicida (strain LFI1238) (Vibrio salmonicida (strain LFI1238)).